Consider the following 560-residue polypeptide: Bifunctional NAD(P)H-hydrate repair enzyme (560 aa).

The interval M1 to V241 is NAD(P)H-hydrate epimerase. Residues L29–A235 form the YjeF N-terminal domain. Positions N77–D81 are NADPHX 1; for epimerase activity. N78 and D145 together coordinate K(+). An NADPHX 1; for epimerase activity region spans residues G149–P155. (6S)-NADPHX is bound by residues Y160 and D178. S181 contacts K(+). The YjeF C-terminal domain occupies L249 to S547. The interval L249–Q560 is ADP-dependent (S)-NAD(P)H-hydrate dehydratase. G351 provides a ligand contact to (6S)-NADPHX. The segment at H417–R423 is NADPHX 2; for dehydratase activity. Residues K454–T458 and N475–G484 each bind ADP. D485 is a binding site for (6S)-NADPHX.

It in the N-terminal section; belongs to the NnrE/AIBP family. The protein in the C-terminal section; belongs to the NnrD/CARKD family. The cofactor is K(+).

It catalyses the reaction (6S)-NADHX + ADP = AMP + phosphate + NADH + H(+). The catalysed reaction is (6S)-NADPHX + ADP = AMP + phosphate + NADPH + H(+). The enzyme catalyses (6R)-NADHX = (6S)-NADHX. It carries out the reaction (6R)-NADPHX = (6S)-NADPHX. Its function is as follows. Bifunctional enzyme that catalyzes the epimerization of the S- and R-forms of NAD(P)HX and the dehydration of the S-form of NAD(P)HX at the expense of ADP, which is converted to AMP. This allows the repair of both epimers of NAD(P)HX, a damaged form of NAD(P)H that is a result of enzymatic or heat-dependent hydration. The chain is Bifunctional NAD(P)H-hydrate repair enzyme from Leishmania major.